The primary structure comprises 131 residues: Histone H2B.2 (131 aa).

A compositionally biased stretch (basic and acidic residues) spans 1 to 20 (MAPPKAEKKPASKAPAEKKP). Residues 1-39 (MAPPKAEKKPASKAPAEKKPAAKKTASSTDAKKRTKTRK) are disordered. N6-acetyllysine; alternate is present on residues K8 and K9. Glycyl lysine isopeptide (Lys-Gly) (interchain with G-Cter in SUMO); alternate cross-links involve residues K8 and K9. S12 bears the Phosphoserine mark. An N6-acetyllysine modification is found at K13. Residue K18 is modified to N6-acetyllysine; alternate. K18 is covalently cross-linked (Glycyl lysine isopeptide (Lys-Gly) (interchain with G-Cter in SUMO); alternate). K19 participates in a covalent cross-link: Glycyl lysine isopeptide (Lys-Gly) (interchain with G-Cter in SUMO). A Glycyl lysine isopeptide (Lys-Gly) (interchain with G-Cter in ubiquitin) cross-link involves residue K125.

Belongs to the histone H2B family. The nucleosome is a histone octamer containing two molecules each of H2A, H2B, H3 and H4 assembled in one H3-H4 heterotetramer and two H2A-H2B heterodimers. The octamer wraps approximately 147 bp of DNA. Post-translationally, monoubiquitinated to form H2BK123ub1. H2BK123ub1 gives a specific tag for epigenetic transcriptional activation and is also prerequisite for H3K4me and H3K79me formation. H2BK123ub1 also modulates the formation of double-strand breaks during meiosis and is a prerequisite for DNA-damage checkpoint activation. In terms of processing, phosphorylated by STE20 to form H2BS10ph during progression through meiotic prophase. May be correlated with chromosome condensation. Acetylated by GCN5 to form H2BK11ac and H2BK16ac. H2BK16ac can also be formed by ESA1. Acetylation of N-terminal lysines and particularly formation of H2BK11acK16ac has a positive effect on transcription. Post-translationally, sumoylation to form H2BK6su or H2BK7su, and probably also H2BK16su or H2BK17su, occurs preferentially near the telomeres and represses gene transcription.

The protein resides in the nucleus. It localises to the chromosome. Core component of nucleosome. Nucleosomes wrap and compact DNA into chromatin, limiting DNA accessibility to the cellular machineries which require DNA as a template. Histones thereby play a central role in transcription regulation, DNA repair, DNA replication and chromosomal stability. DNA accessibility is regulated via a complex set of post-translational modifications of histones, also called histone code, and nucleosome remodeling. The polypeptide is Histone H2B.2 (HTB2) (Scheffersomyces stipitis (strain ATCC 58785 / CBS 6054 / NBRC 10063 / NRRL Y-11545) (Yeast)).